The primary structure comprises 360 residues: Peptide chain release factor 1 (360 aa).

An N5-methylglutamine modification is found at Gln-235. Residues 284–313 (AKRQQAEASTRRNLLGSGDRSDRNRTYNFP) are disordered.

Belongs to the prokaryotic/mitochondrial release factor family. Post-translationally, methylated by PrmC. Methylation increases the termination efficiency of RF1.

It is found in the cytoplasm. Functionally, peptide chain release factor 1 directs the termination of translation in response to the peptide chain termination codons UAG and UAA. This Citrobacter koseri (strain ATCC BAA-895 / CDC 4225-83 / SGSC4696) protein is Peptide chain release factor 1.